A 394-amino-acid chain; its full sequence is uncharacterized protein (394 aa).

Belongs to the mycobacterial PPE family.

This is an uncharacterized protein from Mycobacterium tuberculosis (strain CDC 1551 / Oshkosh).